Here is a 526-residue protein sequence, read N- to C-terminus: Ferrochelatase-2, chloroplastic (526 aa).

Belongs to the ferrochelatase family.

It is found in the plastid. The protein resides in the chloroplast. The catalysed reaction is heme b + 2 H(+) = protoporphyrin IX + Fe(2+). The protein operates within porphyrin-containing compound metabolism; protoheme biosynthesis; protoheme from protoporphyrin-IX: step 1/1. In terms of biological role, catalyzes the ferrous insertion into protoporphyrin IX. In Oryza sativa subsp. japonica (Rice), this protein is Ferrochelatase-2, chloroplastic.